Consider the following 945-residue polypeptide: Netrin receptor UNC5B (945 aa).

Residues 1-26 form the signal peptide; sequence MRARSGVRSALLLALLLCWDPTPSLA. Topologically, residues 27-377 are extracellular; that stretch reads GVDSAGQVLP…LETSGDVALY (351 aa). In terms of domain architecture, Ig-like spans 48-145; the sequence is PYFLLEPQDA…SGTTKSRRAY (98 aa). 9 cysteine pairs are disulfide-bonded: Cys-69-Cys-130, Cys-81-Cys-128, Cys-174-Cys-225, Cys-258-Cys-295, Cys-262-Cys-299, Cys-273-Cys-285, Cys-314-Cys-348, Cys-318-Cys-353, and Cys-326-Cys-338. The Ig-like C2-type domain maps to 153 to 242; the sequence is KNFDQEPLAK…KRRSTTATVI (90 aa). N-linked (GlcNAc...) asparagine glycosylation occurs at Asn-222. 2 consecutive TSP type-1 domains span residues 246 to 300 and 302 to 354; these read NGGW…TVCP and DGAW…GLCV. The N-linked (GlcNAc...) asparagine glycan is linked to Asn-347. The chain crosses the membrane as a helical span at residues 378–398; that stretch reads AGLVVAVFVVVAVLMAVGVIV. At 399–945 the chain is on the cytoplasmic side; that stretch reads YRRNCRDFDT…LVAMATDGDC (547 aa). Cys-403 is lipidated: S-palmitoyl cysteine. A ZU5 domain is found at 543-686; that stretch reads SSVSGTFGCL…LGTYVFMGES (144 aa). Residue Tyr-581 is modified to Phosphotyrosine. The interval 689–838 is UPA domain; the sequence is RSAVKRLQLA…AETPAGSLDA (150 aa). The interval 707 to 725 is interaction with DCC; it reads SLEYSLRVYCLEDTPVALK. The Death domain occupies 865–943; it reads KICSSLDAPN…EMLVAMATDG (79 aa).

This sequence belongs to the unc-5 family. Interacts with the cytoplasmic part of DCC. Interacts with GNAI2 via its cytoplasmic part. Interacts (via death domain) with DAPK1 (via death domain). Interacts (via extracellular domain) with FLRT2 and FLRT3 (via extracellular domain), but has higher affinity for FLRT3. Identified in a complex with FLRT3 and ADGRL3; does not interact with ADGRL3 by itself. In terms of processing, phosphorylated on cytoplasmic tyrosine residues. Post-translationally, palmitoylation is required for pro-apoptotic activity, but not for location at lipid rafts. Proteolytically cleaved by caspases during apoptosis. The cleavage does not take place when the receptor is associated with netrin ligand. Its cleavage by caspases is required to induce apoptosis. In terms of tissue distribution, highly expressed in brain. Expressed in lung during late development. Expressed during early blood vessel formation, in the semicircular canal and in a dorsal to ventral gradient in the retina.

The protein resides in the cell membrane. Its subcellular location is the membrane raft. Its function is as follows. Receptor for netrin required for axon guidance. Mediates axon repulsion of neuronal growth cones in the developing nervous system upon ligand binding. Axon repulsion in growth cones may be caused by its association with DCC that may trigger signaling for repulsion. Functions as a netrin receptor that negatively regulates vascular branching during angiogenesis. Mediates retraction of tip cell filopodia on endothelial growth cones in response to netrin. It also acts as a dependence receptor required for apoptosis induction when not associated with netrin ligand. Mediates apoptosis by activating DAPK1. In the absence of NTN1, activates DAPK1 by reducing its autoinhibitory phosphorylation at Ser-308 thereby increasing its catalytic activity. The protein is Netrin receptor UNC5B (Unc5b) of Mus musculus (Mouse).